We begin with the raw amino-acid sequence, 217 residues long: Flagellar L-ring protein 1 (217 aa).

Residues 1–16 (MTLARLAPLAALLLAA) form the signal peptide. Cys17 carries N-palmitoyl cysteine lipidation. Cys17 carries the S-diacylglycerol cysteine lipid modification.

The protein belongs to the FlgH family. As to quaternary structure, the basal body constitutes a major portion of the flagellar organelle and consists of four rings (L,P,S, and M) mounted on a central rod.

It is found in the cell outer membrane. It localises to the bacterial flagellum basal body. In terms of biological role, assembles around the rod to form the L-ring and probably protects the motor/basal body from shearing forces during rotation. The sequence is that of Flagellar L-ring protein 1 from Chromobacterium violaceum (strain ATCC 12472 / DSM 30191 / JCM 1249 / CCUG 213 / NBRC 12614 / NCIMB 9131 / NCTC 9757 / MK).